The sequence spans 574 residues: Proline--tRNA ligase (574 aa).

The protein belongs to the class-II aminoacyl-tRNA synthetase family. ProS type 1 subfamily. In terms of assembly, homodimer.

It localises to the cytoplasm. The enzyme catalyses tRNA(Pro) + L-proline + ATP = L-prolyl-tRNA(Pro) + AMP + diphosphate. In terms of biological role, catalyzes the attachment of proline to tRNA(Pro) in a two-step reaction: proline is first activated by ATP to form Pro-AMP and then transferred to the acceptor end of tRNA(Pro). As ProRS can inadvertently accommodate and process non-cognate amino acids such as alanine and cysteine, to avoid such errors it has two additional distinct editing activities against alanine. One activity is designated as 'pretransfer' editing and involves the tRNA(Pro)-independent hydrolysis of activated Ala-AMP. The other activity is designated 'posttransfer' editing and involves deacylation of mischarged Ala-tRNA(Pro). The misacylated Cys-tRNA(Pro) is not edited by ProRS. This is Proline--tRNA ligase from Nitratidesulfovibrio vulgaris (strain ATCC 29579 / DSM 644 / CCUG 34227 / NCIMB 8303 / VKM B-1760 / Hildenborough) (Desulfovibrio vulgaris).